The chain runs to 192 residues: dTTP/UTP pyrophosphatase (192 aa).

Residue aspartate 75 is the Proton acceptor of the active site.

This sequence belongs to the Maf family. YhdE subfamily. A divalent metal cation serves as cofactor.

The protein localises to the cytoplasm. It carries out the reaction dTTP + H2O = dTMP + diphosphate + H(+). The enzyme catalyses UTP + H2O = UMP + diphosphate + H(+). In terms of biological role, nucleoside triphosphate pyrophosphatase that hydrolyzes dTTP and UTP. May have a dual role in cell division arrest and in preventing the incorporation of modified nucleotides into cellular nucleic acids. In Pelodictyon phaeoclathratiforme (strain DSM 5477 / BU-1), this protein is dTTP/UTP pyrophosphatase.